A 377-amino-acid chain; its full sequence is Histidinol-phosphate aminotransferase (377 aa).

At Lys232 the chain carries N6-(pyridoxal phosphate)lysine.

It belongs to the class-II pyridoxal-phosphate-dependent aminotransferase family. Histidinol-phosphate aminotransferase subfamily. Homodimer. Pyridoxal 5'-phosphate is required as a cofactor.

It catalyses the reaction L-histidinol phosphate + 2-oxoglutarate = 3-(imidazol-4-yl)-2-oxopropyl phosphate + L-glutamate. Its pathway is amino-acid biosynthesis; L-histidine biosynthesis; L-histidine from 5-phospho-alpha-D-ribose 1-diphosphate: step 7/9. The chain is Histidinol-phosphate aminotransferase from Mycobacterium sp. (strain KMS).